A 696-amino-acid polypeptide reads, in one-letter code: Ribonucleoside-diphosphate reductase subunit beta (696 aa).

3 residues coordinate Fe cation: Asp-97, Glu-127, and His-130. Tyr-134 is a catalytic residue. Glu-194 and Glu-228 together coordinate Fe cation. One can recognise a DOD-type homing endonuclease domain in the interval 377 to 507 (DGTIDSKRNG…FVQALCALGG (131 aa)). Residue His-577 participates in Fe cation binding.

The protein belongs to the ribonucleoside diphosphate reductase small chain family. Tetramer of two alpha and two beta subunits. Fe cation is required as a cofactor. In terms of processing, this protein undergoes a protein self splicing that involves a post-translational excision of the intervening region (intein) followed by peptide ligation.

It catalyses the reaction a 2'-deoxyribonucleoside 5'-diphosphate + [thioredoxin]-disulfide + H2O = a ribonucleoside 5'-diphosphate + [thioredoxin]-dithiol. Provides the precursors necessary for DNA synthesis. Catalyzes the biosynthesis of deoxyribonucleotides from the corresponding ribonucleotides. This Aquifex aeolicus (strain VF5) protein is Ribonucleoside-diphosphate reductase subunit beta (nrdB).